Consider the following 206-residue polypeptide: Ras-related protein Rab-18 (206 aa).

M1 carries the N-acetylmethionine modification. Residues S17, G20, K21, S22, S23, D34, P35, T40, G66, K123, and D125 each coordinate GTP. Position 22 (S22) interacts with Mg(2+). Short sequence motifs (switch) lie at residues 31–45 and 63–80; these read DTFD…GVDF and DTAG…YYRG. Position 40 (T40) interacts with Mg(2+). S144 carries the post-translational modification Phosphoserine. GTP is bound at residue A152. The S-palmitoyl cysteine moiety is linked to residue C199. Cysteine methyl ester is present on C203. C203 carries the S-geranylgeranyl cysteine lipid modification. Positions 204 to 206 are cleaved as a propeptide — removed in mature form; sequence SVL.

Belongs to the small GTPase superfamily. Rab family. As to quaternary structure, interacts (in GTP-bound form) with ZFYVE1. Interacts with ZW10 and this interaction is enhanced in the presence of ZFYVE1. Interacts with BSCL2. Mg(2+) is required as a cofactor. In terms of tissue distribution, expression is high in the brain, moderate in the pituitary, and low in the liver. Detected in all tissues. Highly enriched on apical endocytic structures in polarized epithelial cells of kidney proximal tubules. Detected on both the apical and basolateral domains in epithelial cells of the intestine.

The protein resides in the endoplasmic reticulum membrane. Its subcellular location is the golgi apparatus. The protein localises to the cis-Golgi network membrane. It is found in the lipid droplet. It localises to the apical cell membrane. It catalyses the reaction GTP + H2O = GDP + phosphate + H(+). Its activity is regulated as follows. Regulated by guanine nucleotide exchange factor (GEF) RAB3GAP1-RAB3GAP2 complex at the cis-Golgi membrane which promotes the exchange of bound GDP for free GTP. Regulated by GTPase activating protein (GAP) TBC1D20 at the ER membrane which increases the GTP hydrolysis activity. Inhibited by GDP dissociation inhibitors (GDIs) which prevent Rab-GDP dissociation. Its function is as follows. The small GTPases Rab are key regulators of intracellular membrane trafficking, from the formation of transport vesicles to their fusion with membranes. Rabs cycle between an inactive GDP-bound form and an active GTP-bound form that is able to recruit to membranes different sets of downstream effectors directly responsible for vesicle formation, movement, tethering and fusion. RAB18 is required for the localization of ZFYVE1 to lipid droplets and for its function in mediating the formation of endoplasmic reticulum-lipid droplets (ER-LD) contacts. Also required for maintaining endoplasmic reticulum structure. Plays a role in apical endocytosis/recycling. Plays a key role in eye and brain development and neurodegeneration. The sequence is that of Ras-related protein Rab-18 from Mus musculus (Mouse).